Reading from the N-terminus, the 558-residue chain is Glutamine--tRNA ligase (558 aa).

The short motif at 36 to 46 (PEPNGYLHIGH) is the 'HIGH' region element. Residues 37-39 (EPN) and 43-49 (HIGHAKS) contribute to the ATP site. L-glutamine contacts are provided by D69 and Y214. ATP contacts are provided by residues T233, 263–264 (RL), and 271–273 (LSK). A 'KMSKS' region motif is present at residues 270–274 (LLSKR).

This sequence belongs to the class-I aminoacyl-tRNA synthetase family. In terms of assembly, monomer.

The protein localises to the cytoplasm. It carries out the reaction tRNA(Gln) + L-glutamine + ATP = L-glutaminyl-tRNA(Gln) + AMP + diphosphate. The protein is Glutamine--tRNA ligase of Bradyrhizobium diazoefficiens (strain JCM 10833 / BCRC 13528 / IAM 13628 / NBRC 14792 / USDA 110).